A 605-amino-acid chain; its full sequence is Cystathionine gamma-synthase-like enzyme iboG1 (605 aa).

Tyr-289 contributes to the substrate binding site. Lys-393 is subject to N6-(pyridoxal phosphate)lysine.

Belongs to the trans-sulfuration enzymes family. Pyridoxal 5'-phosphate is required as a cofactor.

It functions in the pathway secondary metabolite biosynthesis. In terms of biological role, cystathionine gamma-synthase-like enzyme; part of the gene cluster that mediates the biosynthesis of the psychoactive metabolites ibotenic acid and muscimol. The first committed step is glutamate hydroxylation by the 2-oxoglutarate-dependent dioxygenase iboH, and the last step is decarboxylation of ibotenic acid to muscimol by the decarboxylase iboD. The order of the intermediate reactions is somewhat ambiguous. IboA likely activates the carboxylic acid at position 5 to introduce an amide bond, and the flavin monooxygenase iboF generates the N-O bond. There are several options for the latter step. One option is that iboF directly hydroxylates the amide nitrogen formed by iboA to produce a hydroxamic acid species. Another option is that iboF hydroxylates an external N-containing compound, whose resulting N-O bond is subsequently introduced into the hydroxyglutamate scaffold. The paralogous PLP-dependent cystathionine gamma-synthase-like enzymes iboG1 and iboG2 are likely involved in substitution of the OH group at position 3 by the O-N moiety. The first cyclic intermediate is most probably tricholomic acid which is likely desaturated to ibotenic acid by the cytochrome P450 monooxygenase iboC. This Amanita muscaria (strain Koide BX008) protein is Cystathionine gamma-synthase-like enzyme iboG1 (iboG1).